The chain runs to 295 residues: 4-hydroxy-tetrahydrodipicolinate synthase (295 aa).

T47 provides a ligand contact to pyruvate. Y135 functions as the Proton donor/acceptor in the catalytic mechanism. K163 acts as the Schiff-base intermediate with substrate in catalysis. I206 is a binding site for pyruvate.

This sequence belongs to the DapA family. Homodimer.

It is found in the cytoplasm. It carries out the reaction L-aspartate 4-semialdehyde + pyruvate = (2S,4S)-4-hydroxy-2,3,4,5-tetrahydrodipicolinate + H2O + H(+). It functions in the pathway amino-acid biosynthesis; L-lysine biosynthesis via DAP pathway; (S)-tetrahydrodipicolinate from L-aspartate: step 3/4. Catalyzes the condensation of (S)-aspartate-beta-semialdehyde [(S)-ASA] and pyruvate to 4-hydroxy-tetrahydrodipicolinate (HTPA). The sequence is that of 4-hydroxy-tetrahydrodipicolinate synthase from Staphylococcus aureus (strain Mu50 / ATCC 700699).